Here is a 101-residue protein sequence, read N- to C-terminus: MMLEYVLFLSAYLFSIGIYGLITSRNMVRALMCLELILNAVNINLVTFSDLFDSRQLKGDIFSIFVIAIAAAEAAIGPAIVSSIYRNRKSIRINQSNLLNK.

3 helical membrane passes run 2–22, 32–52, and 61–81; these read MLEYVLFLSAYLFSIGIYGLI, MCLELILNAVNINLVTFSDLF, and IFSIFVIAIAAAEAAIGPAIV.

The protein belongs to the complex I subunit 4L family. NDH is composed of at least 16 different subunits, 5 of which are encoded in the nucleus.

The protein localises to the plastid. Its subcellular location is the chloroplast thylakoid membrane. It carries out the reaction a plastoquinone + NADH + (n+1) H(+)(in) = a plastoquinol + NAD(+) + n H(+)(out). It catalyses the reaction a plastoquinone + NADPH + (n+1) H(+)(in) = a plastoquinol + NADP(+) + n H(+)(out). In terms of biological role, NDH shuttles electrons from NAD(P)H:plastoquinone, via FMN and iron-sulfur (Fe-S) centers, to quinones in the photosynthetic chain and possibly in a chloroplast respiratory chain. The immediate electron acceptor for the enzyme in this species is believed to be plastoquinone. Couples the redox reaction to proton translocation, and thus conserves the redox energy in a proton gradient. The protein is NAD(P)H-quinone oxidoreductase subunit 4L, chloroplastic of Acorus calamus var. americanus (American sweet flag).